The sequence spans 167 residues: Transcription antitermination protein NusB (167 aa).

Residues 1–21 (MIPTDTAPPSKPAQGHKGYKN) are disordered.

The protein belongs to the NusB family.

In terms of biological role, involved in transcription antitermination. Required for transcription of ribosomal RNA (rRNA) genes. Binds specifically to the boxA antiterminator sequence of the ribosomal RNA (rrn) operons. This Nitrosomonas eutropha (strain DSM 101675 / C91 / Nm57) protein is Transcription antitermination protein NusB.